Reading from the N-terminus, the 397-residue chain is Elongation factor Tu (397 aa).

In terms of domain architecture, tr-type G spans Lys10–Pro206. Residues Gly19 to Thr26 form a G1 region. GTP is bound at residue Gly19–Thr26. Thr26 contributes to the Mg(2+) binding site. The tract at residues Gly62–Ser66 is G2. Residues Asp83 to Gly86 form a G3 region. GTP-binding positions include Asp83–His87 and Asn138–Asp141. A G4 region spans residues Asn138–Asp141. The tract at residues Ser176–Leu178 is G5.

Belongs to the TRAFAC class translation factor GTPase superfamily. Classic translation factor GTPase family. EF-Tu/EF-1A subfamily. Monomer.

It is found in the cytoplasm. The enzyme catalyses GTP + H2O = GDP + phosphate + H(+). In terms of biological role, GTP hydrolase that promotes the GTP-dependent binding of aminoacyl-tRNA to the A-site of ribosomes during protein biosynthesis. This is Elongation factor Tu from Kitasatospora aureofaciens (Streptomyces aureofaciens).